Reading from the N-terminus, the 673-residue chain is L-type lectin-domain containing receptor kinase SIT2 (673 aa).

The N-terminal stretch at 1 to 27 is a signal peptide; that stretch reads MVLPKPEMPFFVLLLFLGLGCLRPAAA. Residues 28 to 296 are Extracellular-facing; that stretch reads TDERFVFNGF…FPKPRSKTLE (269 aa). The segment at 32 to 270 is legume-lectin like; sequence FVFNGFTGAN…VLGWSFKMNG (239 aa). 9 N-linked (GlcNAc...) asparagine glycosylation sites follow: asparagine 41, asparagine 60, asparagine 82, asparagine 118, asparagine 138, asparagine 191, asparagine 214, asparagine 235, and asparagine 276. The helical transmembrane segment at 297–317 threads the bilayer; the sequence is IVLPIASAVLVFAVAAAVFVF. Over 318–673 the chain is Cytoplasmic; it reads MRRRRMFSEL…GTFSDLSGGR (356 aa). Positions 352–631 constitute a Protein kinase domain; it reads FSDKRLLGIG…LEGDVPLPEL (280 aa). Residues 358–366 and lysine 381 each bind ATP; that span reads LGIGGFGRV. The Proton acceptor role is filled by aspartate 477.

It in the C-terminal section; belongs to the protein kinase superfamily. Ser/Thr protein kinase family. In the N-terminal section; belongs to the leguminous lectin family. Mainly expressed in root epidermal cells.

It is found in the cell membrane. The catalysed reaction is L-seryl-[protein] + ATP = O-phospho-L-seryl-[protein] + ADP + H(+). It catalyses the reaction L-threonyl-[protein] + ATP = O-phospho-L-threonyl-[protein] + ADP + H(+). Functionally, lectin-domain containing receptor kinase involved in salt stress response. Acts as a negative regulator of salt tolerance. In Oryza sativa subsp. japonica (Rice), this protein is L-type lectin-domain containing receptor kinase SIT2.